Here is a 398-residue protein sequence, read N- to C-terminus: DnaJ-like protein R260 (398 aa).

Residues 7–72 (DLYEILGLTP…EKRRVYDQYG (66 aa)) form the J domain. Residues 118–202 (KKTVKVTITV…CKGAGINKSE (85 aa)) form a CR-type zinc finger. CXXCXGXG motif repeat units follow at residues 131–138 (CDDCDATG), 147–154 (CKVCRGKG), 173–180 (CHGCQGKK), and 190–197 (CPSCKGAG). The disordered stretch occupies residues 364–398 (LRQINTDPSDESQDRDSEESYGGHGRPEGVGCAQQ). A compositionally biased stretch (acidic residues) spans 371-382 (PSDESQDRDSEE).

It depends on Zn(2+) as a cofactor.

The sequence is that of DnaJ-like protein R260 from Acanthamoeba polyphaga mimivirus (APMV).